A 157-amino-acid chain; its full sequence is MGVISYDMEIKSSLSAAKLFKAFVLDVGTLINKALPNVIKSVEILQGDGGAGTIKLVHFGEGGPVPSVKHHVEELDKDNMSYKYSIVDGEALMPGLQSISYVIKIEPSGHGSVCKHNTTFHFKAGSNINEDEIKAGKERAAEMIKAVEAYVQANPDY.

Asn-79 and Asn-117 each carry an N-linked (GlcNAc...) asparagine glycan.

Belongs to the BetVI family.

This is Probable intracellular pathogenesis-related protein T1 (PCKR3) from Catharanthus roseus (Madagascar periwinkle).